The sequence spans 174 residues: Peptide deformylase (174 aa).

2 residues coordinate Fe cation: cysteine 94 and histidine 136. Glutamate 137 is an active-site residue. Histidine 140 provides a ligand contact to Fe cation.

Belongs to the polypeptide deformylase family. Fe(2+) is required as a cofactor.

It catalyses the reaction N-terminal N-formyl-L-methionyl-[peptide] + H2O = N-terminal L-methionyl-[peptide] + formate. In terms of biological role, removes the formyl group from the N-terminal Met of newly synthesized proteins. Requires at least a dipeptide for an efficient rate of reaction. N-terminal L-methionine is a prerequisite for activity but the enzyme has broad specificity at other positions. The sequence is that of Peptide deformylase from Maricaulis maris (strain MCS10) (Caulobacter maris).